The following is a 306-amino-acid chain: Tyrosine--tRNA ligase (306 aa).

Positions 32 and 36 each coordinate L-tyrosine. The 'HIGH' region motif lies at 37-45 (PSGKIHLGH). A tyrosine region spans residues 151–158 (YPIMQVND). Gln173 is a binding site for L-tyrosine. Positions 204-208 (KMSSS) match the 'KMSKS' region motif. Ser207 provides a ligand contact to ATP. Interaction with t-RNA regions lie at residues 228–231 (KAYC) and 283–288 (HPMDLK).

The protein belongs to the class-I aminoacyl-tRNA synthetase family. TyrS type 3 subfamily. In terms of assembly, homodimer.

It is found in the cytoplasm. It carries out the reaction tRNA(Tyr) + L-tyrosine + ATP = L-tyrosyl-tRNA(Tyr) + AMP + diphosphate + H(+). Catalyzes the attachment of tyrosine to tRNA(Tyr) in a two-step reaction: tyrosine is first activated by ATP to form Tyr-AMP and then transferred to the acceptor end of tRNA(Tyr). This chain is Tyrosine--tRNA ligase (tyrS), found in Methanocaldococcus jannaschii (strain ATCC 43067 / DSM 2661 / JAL-1 / JCM 10045 / NBRC 100440) (Methanococcus jannaschii).